A 147-amino-acid polypeptide reads, in one-letter code: Hemoglobin subunit gamma-1 (147 aa).

Residues 3 to 147 (NFTAEDKAAI…VASALGSRYH (145 aa)) enclose the Globin domain. Threonine 13 bears the Phosphothreonine mark. 3 positions are modified to phosphoserine: serine 45, serine 51, and serine 53. Residue lysine 60 is modified to N6-acetyllysine. Histidine 64 lines the heme b pocket. Lysine 83 bears the N6-acetyllysine mark. Histidine 93 contributes to the heme b binding site. An S-nitrosocysteine modification is found at cysteine 94. At serine 140 the chain carries Phosphoserine.

This sequence belongs to the globin family. Heterotetramer of two alpha chains and two gamma chains in fetal hemoglobin (Hb F). Red blood cells.

In terms of biological role, gamma chains make up the fetal hemoglobin F, in combination with alpha chains. This chain is Hemoglobin subunit gamma-1 (HBG1), found in Sapajus apella (Brown-capped capuchin).